Reading from the N-terminus, the 473-residue chain is Lipid A galacturonosyltransferase RgtD (473 aa).

Helical transmembrane passes span 6-26, 68-88, 94-114, 118-138, 160-180, 190-210, 238-258, 271-291, 295-315, and 327-347; these read GLLI…FDAT, AIYW…LVLM, FVGP…PGVA, VFFS…LAYF, FLTK…LLLI, VIIA…WNLQ, FFAA…LWAV, KMLV…ATVA, ANWA…LLYL, and INGI…QLLL.

The protein resides in the cell membrane. Its pathway is bacterial outer membrane biogenesis; LPS lipid A biosynthesis. Functionally, involved in the modification of the lipopolysaccharide (LPS) lipid A moiety. Catalyzes the transfer of a galacturonic acid (GalA) residue to the 4'-position of 4'-dephosphorylated lipid A, using dodecaprenyl phosphate-GalA as the donor substrate. Acts before the other GalA transferases RgtA, RgtB and RgtC. The polypeptide is Lipid A galacturonosyltransferase RgtD (Rhizobium johnstonii (strain DSM 114642 / LMG 32736 / 3841) (Rhizobium leguminosarum bv. viciae)).